We begin with the raw amino-acid sequence, 64 residues long: Prokaryotic ubiquitin-like protein Pup (64 aa).

The tract at residues 1–38 (MAQEQTKRGGGGGEDDDPTGSTAAGQERREKLTEETDD) is disordered. Residues 21-58 (STAAGQERREKLTEETDDLLDEIDDVLEENAEDFVRAY) are ARC ATPase binding. Positions 23–52 (AAGQERREKLTEETDDLLDEIDDVLEENAE) form a coiled coil. Glutamine 64 bears the Deamidated glutamine mark. Glutamine 64 participates in a covalent cross-link: Isoglutamyl lysine isopeptide (Gln-Lys) (interchain with K-? in acceptor proteins).

The protein belongs to the prokaryotic ubiquitin-like protein family. Strongly interacts with the proteasome-associated ATPase ARC through a hydrophobic interface; the interacting region of Pup lies in its C-terminal half. There is one Pup binding site per ARC hexamer ring. Is modified by deamidation of its C-terminal glutamine to glutamate by the deamidase Dop, a prerequisite to the subsequent pupylation process.

The protein operates within protein degradation; proteasomal Pup-dependent pathway. Protein modifier that is covalently attached to lysine residues of substrate proteins, thereby targeting them for proteasomal degradation. The tagging system is termed pupylation. This Mycolicibacterium gilvum (strain PYR-GCK) (Mycobacterium gilvum (strain PYR-GCK)) protein is Prokaryotic ubiquitin-like protein Pup.